A 392-amino-acid polypeptide reads, in one-letter code: S-adenosylmethionine synthase (392 aa).

An ATP-binding site is contributed by histidine 20. Aspartate 22 provides a ligand contact to Mg(2+). K(+) is bound at residue glutamate 48. 2 residues coordinate L-methionine: glutamate 61 and glutamine 106. Residues 106–116 form a flexible loop region; the sequence is QSQDIINAIKK. Residues 171-173, aspartate 248, 254-255, alanine 271, and lysine 275 each bind ATP; these read DSK and RK. Aspartate 248 contacts L-methionine. Lysine 279 provides a ligand contact to L-methionine.

The protein belongs to the AdoMet synthase family. Homotetramer; dimer of dimers. Requires Mg(2+) as cofactor. The cofactor is K(+).

The protein localises to the cytoplasm. It catalyses the reaction L-methionine + ATP + H2O = S-adenosyl-L-methionine + phosphate + diphosphate. It participates in amino-acid biosynthesis; S-adenosyl-L-methionine biosynthesis; S-adenosyl-L-methionine from L-methionine: step 1/1. Functionally, catalyzes the formation of S-adenosylmethionine (AdoMet) from methionine and ATP. The overall synthetic reaction is composed of two sequential steps, AdoMet formation and the subsequent tripolyphosphate hydrolysis which occurs prior to release of AdoMet from the enzyme. This Borrelia garinii subsp. bavariensis (strain ATCC BAA-2496 / DSM 23469 / PBi) (Borreliella bavariensis) protein is S-adenosylmethionine synthase.